A 278-amino-acid polypeptide reads, in one-letter code: 4-deoxy-L-threo-5-hexosulose-uronate ketol-isomerase (278 aa).

The Zn(2+) site is built by His-196, His-198, Glu-203, and His-245.

The protein belongs to the KduI family. It depends on Zn(2+) as a cofactor.

It catalyses the reaction 5-dehydro-4-deoxy-D-glucuronate = 3-deoxy-D-glycero-2,5-hexodiulosonate. It participates in glycan metabolism; pectin degradation; 2-dehydro-3-deoxy-D-gluconate from pectin: step 4/5. In terms of biological role, catalyzes the isomerization of 5-dehydro-4-deoxy-D-glucuronate to 3-deoxy-D-glycero-2,5-hexodiulosonate. The protein is 4-deoxy-L-threo-5-hexosulose-uronate ketol-isomerase of Pectobacterium carotovorum subsp. carotovorum (Erwinia carotovora subsp. carotovora).